A 251-amino-acid polypeptide reads, in one-letter code: ATP synthase subunit a (251 aa).

7 helical membrane-spanning segments follow: residues 29–49 (FTQS…ITLV), 56–73 (LVPG…EFIA), 87–107 (FVPL…FGMI), 117–137 (IIVT…YGFM), 159–181 (LIVA…RLFA), 192–212 (IFAG…LSPL), and 218–238 (VAIT…FATL).

The protein belongs to the ATPase A chain family. F-type ATPases have 2 components, CF(1) - the catalytic core - and CF(0) - the membrane proton channel. CF(1) has five subunits: alpha(3), beta(3), gamma(1), delta(1), epsilon(1). CF(0) has three main subunits: a(1), b(2) and c(9-12). The alpha and beta chains form an alternating ring which encloses part of the gamma chain. CF(1) is attached to CF(0) by a central stalk formed by the gamma and epsilon chains, while a peripheral stalk is formed by the delta and b chains.

Its subcellular location is the cell inner membrane. Functionally, key component of the proton channel; it plays a direct role in the translocation of protons across the membrane. The sequence is that of ATP synthase subunit a from Methylobacterium sp. (strain 4-46).